We begin with the raw amino-acid sequence, 325 residues long: MTEITERIVPPPRKVAGVKESSAEKMARIPIKIIPMPAMRKPEWIRMKVPDSARFREIKQVLRENNLHTVCEEASCPNIGECFSGGTATFMILGDICTRRCPFCDVSHGKPLPPDANEPENLGRTIAQMRLKYVVITSVDRDDLRDGGAQHFVDCIAAVRAHSPQIKVEILVPDFRGRLDRAIHILKAAPPDVMNHNLETVPRLYKEARPGSDYQNSLDLLKEFGKLHPEVPTKSGLMLGLGETDEEILDVMRDLRAHNVTMLTLGQYLQPSPHHLPVKRFVTPQRFAEFERQALAMGFTHAACGPMVRSSYHADHQAQQAGVNF.

[4Fe-4S] cluster is bound by residues Cys-71, Cys-76, Cys-82, Cys-97, Cys-101, Cys-104, and Ser-311. The Radical SAM core domain maps to 83–300 (FSGGTATFMI…ERQALAMGFT (218 aa)).

It belongs to the radical SAM superfamily. Lipoyl synthase family. The cofactor is [4Fe-4S] cluster.

It localises to the cytoplasm. The enzyme catalyses [[Fe-S] cluster scaffold protein carrying a second [4Fe-4S](2+) cluster] + N(6)-octanoyl-L-lysyl-[protein] + 2 oxidized [2Fe-2S]-[ferredoxin] + 2 S-adenosyl-L-methionine + 4 H(+) = [[Fe-S] cluster scaffold protein] + N(6)-[(R)-dihydrolipoyl]-L-lysyl-[protein] + 4 Fe(3+) + 2 hydrogen sulfide + 2 5'-deoxyadenosine + 2 L-methionine + 2 reduced [2Fe-2S]-[ferredoxin]. It functions in the pathway protein modification; protein lipoylation via endogenous pathway; protein N(6)-(lipoyl)lysine from octanoyl-[acyl-carrier-protein]: step 2/2. In terms of biological role, catalyzes the radical-mediated insertion of two sulfur atoms into the C-6 and C-8 positions of the octanoyl moiety bound to the lipoyl domains of lipoate-dependent enzymes, thereby converting the octanoylated domains into lipoylated derivatives. In Methylobacillus flagellatus (strain ATCC 51484 / DSM 6875 / VKM B-1610 / KT), this protein is Lipoyl synthase.